We begin with the raw amino-acid sequence, 436 residues long: Small ribosomal subunit protein uS5m (436 aa).

Positions phenylalanine 152–valine 218 constitute an S5 DRBM domain. Residues glycine 417–aspartate 436 are disordered.

Belongs to the universal ribosomal protein uS5 family. In terms of assembly, component of the mitochondrial ribosome small subunit (28S) which comprises a 12S rRNA and about 30 distinct proteins.

Its subcellular location is the mitochondrion. The protein is Small ribosomal subunit protein uS5m (mrps-5) of Caenorhabditis elegans.